The chain runs to 451 residues: Ribonuclease J (451 aa).

Zn(2+) is bound by residues His84, His86, Asp88, His89, His155, and Asp177. Residue 384–388 participates in substrate binding; it reads HVSGH. Residue His410 participates in Zn(2+) binding.

It belongs to the metallo-beta-lactamase superfamily. RNA-metabolizing metallo-beta-lactamase-like family. Archaeal RNase J subfamily. In terms of assembly, homodimer. Zn(2+) is required as a cofactor.

The protein localises to the cytoplasm. Inhibited by 1,10-phenanthroline. Its function is as follows. A highly processive 5'-3' exoribonuclease; no evidence has been seen for endonuclease activity. Prefers 5'-phosphate or 5'-hydroxyl ends; 5'-triphosphate substrates are very poorly degraded, does not degrade circular RNA. Does not degrade pre-tRNA(Trp) suggesting it is inhibited by strong secondary structures. Also degrades ssNDA but not dsDNA. The sequence is that of Ribonuclease J from Pyrococcus abyssi (strain GE5 / Orsay).